A 395-amino-acid chain; its full sequence is ADP-ribosylation factor-like protein 13A (395 aa).

GTP is bound by residues 28–35 (GLDNSGKS), 71–75 (DLTGD), and 130–133 (NKQD).

This sequence belongs to the small GTPase superfamily. Arf family.

The chain is ADP-ribosylation factor-like protein 13A (Arl13a) from Rattus norvegicus (Rat).